Reading from the N-terminus, the 254-residue chain is Pimeloyl-[acyl-carrier protein] methyl ester esterase (254 aa).

Substrate-binding positions include Trp-20, 80-81 (SL), and 141-145 (FLALQ). Ser-80 (nucleophile) is an active-site residue. Active-site residues include Asp-205 and His-233. His-233 serves as a coordination point for substrate.

It belongs to the AB hydrolase superfamily. Carboxylesterase BioH family. In terms of assembly, monomer.

The protein resides in the cytoplasm. The enzyme catalyses 6-carboxyhexanoyl-[ACP] methyl ester + H2O = 6-carboxyhexanoyl-[ACP] + methanol + H(+). It participates in cofactor biosynthesis; biotin biosynthesis. The physiological role of BioH is to remove the methyl group introduced by BioC when the pimeloyl moiety is complete. It allows to synthesize pimeloyl-ACP via the fatty acid synthetic pathway through the hydrolysis of the ester bonds of pimeloyl-ACP esters. This chain is Pimeloyl-[acyl-carrier protein] methyl ester esterase, found in Methylococcus capsulatus (strain ATCC 33009 / NCIMB 11132 / Bath).